The primary structure comprises 158 residues: Biotin carboxyl carrier protein of acetyl-CoA carboxylase (158 aa).

One can recognise a Biotinyl-binding domain in the interval 81 to 157; that stretch reads YATIVSPMVG…DCGQALMKVE (77 aa). Lysine 123 carries the N6-biotinyllysine modification.

It is found in the plastid. The protein localises to the chloroplast. Its pathway is lipid metabolism; fatty acid biosynthesis. Its function is as follows. This protein is a component of the acetyl coenzyme A carboxylase complex; first, biotin carboxylase catalyzes the carboxylation of the carrier protein and then the transcarboxylase transfers the carboxyl group to form malonyl-CoA. In Pyropia yezoensis (Susabi-nori), this protein is Biotin carboxyl carrier protein of acetyl-CoA carboxylase (accB).